The following is a 216-amino-acid chain: Pyridoxine/pyridoxamine 5'-phosphate oxidase (216 aa).

Residues Arg-12–Tyr-15 and Lys-70 contribute to the substrate site. Residues Arg-65 to Lys-70, Phe-80 to Thr-81, Arg-86, and Lys-87 contribute to the FMN site. Substrate-binding residues include Tyr-127, Arg-131, and Ser-135. FMN contacts are provided by residues Gln-144 to Ser-145 and Trp-188. Residue Arg-194–His-196 participates in substrate binding. Position 198 (Arg-198) interacts with FMN.

Belongs to the pyridoxamine 5'-phosphate oxidase family. In terms of assembly, homodimer. FMN serves as cofactor.

It carries out the reaction pyridoxamine 5'-phosphate + O2 + H2O = pyridoxal 5'-phosphate + H2O2 + NH4(+). The catalysed reaction is pyridoxine 5'-phosphate + O2 = pyridoxal 5'-phosphate + H2O2. The protein operates within cofactor metabolism; pyridoxal 5'-phosphate salvage; pyridoxal 5'-phosphate from pyridoxamine 5'-phosphate: step 1/1. It participates in cofactor metabolism; pyridoxal 5'-phosphate salvage; pyridoxal 5'-phosphate from pyridoxine 5'-phosphate: step 1/1. In terms of biological role, catalyzes the oxidation of either pyridoxine 5'-phosphate (PNP) or pyridoxamine 5'-phosphate (PMP) into pyridoxal 5'-phosphate (PLP). The polypeptide is Pyridoxine/pyridoxamine 5'-phosphate oxidase (Polaromonas sp. (strain JS666 / ATCC BAA-500)).